A 325-amino-acid chain; its full sequence is Probable 4-hydroxy-tetrahydrodipicolinate reductase 2, chloroplastic (325 aa).

A chloroplast-targeting transit peptide spans 1–32; the sequence is MLSLRPPCTLSPAPWRRRRTLHGAAGTPQRVS. Residues 57–62, 149–151, and 172–175 each bind NAD(+); these read GCTGKM, GTT, and SPQM. His208 (proton donor/acceptor) is an active-site residue. Lys212 acts as the Proton donor in catalysis. 217–218 serves as a coordination point for (S)-2,3,4,5-tetrahydrodipicolinate; that stretch reads GT.

The protein belongs to the DapB family.

The protein resides in the plastid. It localises to the chloroplast. It carries out the reaction (S)-2,3,4,5-tetrahydrodipicolinate + NAD(+) + H2O = (2S,4S)-4-hydroxy-2,3,4,5-tetrahydrodipicolinate + NADH + H(+). The catalysed reaction is (S)-2,3,4,5-tetrahydrodipicolinate + NADP(+) + H2O = (2S,4S)-4-hydroxy-2,3,4,5-tetrahydrodipicolinate + NADPH + H(+). Its pathway is amino-acid biosynthesis; L-lysine biosynthesis via DAP pathway; (S)-tetrahydrodipicolinate from L-aspartate: step 4/4. Its function is as follows. Catalyzes the conversion of 4-hydroxy-tetrahydrodipicolinate (HTPA) to tetrahydrodipicolinate. The chain is Probable 4-hydroxy-tetrahydrodipicolinate reductase 2, chloroplastic (DAPB2) from Oryza sativa subsp. japonica (Rice).